The primary structure comprises 472 residues: Carboxypeptidase Q (472 aa).

The N-terminal stretch at 1–20 (MKFLIFAFFGGVHLLSLCSG) is a signal peptide. A propeptide spanning residues 21-44 (KAICKNGISKRTFEEIKEEIASCG) is cleaved from the precursor. Residues Asn-61 and Asn-179 are each glycosylated (N-linked (GlcNAc...) asparagine). His-290 and Asp-302 together coordinate Zn(2+). Glu-336 (nucleophile) is an active-site residue. A Zn(2+)-binding site is contributed by Glu-337. N-linked (GlcNAc...) asparagine glycans are attached at residues Asn-353 and Asn-356. A Zn(2+)-binding site is contributed by Asp-364. An N-linked (GlcNAc...) asparagine glycan is attached at Asn-396. His-434 serves as a coordination point for Zn(2+).

It belongs to the peptidase M28 family. In terms of assembly, homodimer. The monomeric form is inactive while the homodimer is active. N-glycosylated. The secreted form is modified by hybrid or complex type oligosaccharide chains. Mainly detected in blood plasma. Abundant in placenta and kidney. Present at low level in muscles, liver and skin fibroblasts. Not detected in brain or white blood cells (at protein level).

Its subcellular location is the endoplasmic reticulum. It is found in the golgi apparatus. The protein resides in the lysosome. The protein localises to the secreted. Functionally, carboxypeptidase that may play an important role in the hydrolysis of circulating peptides. Catalyzes the hydrolysis of dipeptides with unsubstituted terminals into amino acids. May play a role in the liberation of thyroxine hormone from its thyroglobulin (Tg) precursor. This chain is Carboxypeptidase Q (CPQ), found in Homo sapiens (Human).